The primary structure comprises 69 residues: uncharacterized protein (69 aa).

Residues 13–35 traverse the membrane as a helical segment; the sequence is IRSINPTLLNFINYFLLIVPQFI.

Its subcellular location is the membrane. This is an uncharacterized protein from Saccharomyces cerevisiae (strain ATCC 204508 / S288c) (Baker's yeast).